Here is a 252-residue protein sequence, read N- to C-terminus: Chlorophyll a-b binding protein P4, chloroplastic (252 aa).

Tryptophan 56 lines the chlorophyll b pocket. The chlorophyll a site is built by phenylalanine 76 and glutamate 95. Arginine 100 contacts chlorophyll b. 2 helical membrane passes run 101-121 (WAML…IGII) and 134-154 (YFAS…YVEI). Positions 137, 143, 153, and 156 each coordinate chlorophyll b. Residues lysine 203, glutamate 204, asparagine 207, arginine 209, glutamine 221, and histidine 236 each contribute to the chlorophyll a site.

Belongs to the light-harvesting chlorophyll a/b-binding (LHC) protein family. The LHC complex consists of chlorophyll a-b binding proteins. Binds at least 14 chlorophylls (8 Chl-a and 6 Chl-b) and carotenoids such as lutein and neoxanthin. is required as a cofactor. Photoregulated by reversible phosphorylation of its threonine residues.

Its subcellular location is the plastid. The protein resides in the chloroplast thylakoid membrane. In terms of biological role, the light-harvesting complex (LHC) functions as a light receptor, it captures and delivers excitation energy to photosystems with which it is closely associated. Its function is as follows. May channel protons produced in the catalytic Mn center of water oxidation into the thylakoid lumen. The sequence is that of Chlorophyll a-b binding protein P4, chloroplastic from Pisum sativum (Garden pea).